Consider the following 248-residue polypeptide: 1-(5-phosphoribosyl)-5-[(5-phosphoribosylamino)methylideneamino] imidazole-4-carboxamide isomerase (248 aa).

Aspartate 8 serves as the catalytic Proton acceptor. Residue aspartate 130 is the Proton donor of the active site.

Belongs to the HisA/HisF family.

The protein resides in the cytoplasm. It carries out the reaction 1-(5-phospho-beta-D-ribosyl)-5-[(5-phospho-beta-D-ribosylamino)methylideneamino]imidazole-4-carboxamide = 5-[(5-phospho-1-deoxy-D-ribulos-1-ylimino)methylamino]-1-(5-phospho-beta-D-ribosyl)imidazole-4-carboxamide. Its pathway is amino-acid biosynthesis; L-histidine biosynthesis; L-histidine from 5-phospho-alpha-D-ribose 1-diphosphate: step 4/9. The sequence is that of 1-(5-phosphoribosyl)-5-[(5-phosphoribosylamino)methylideneamino] imidazole-4-carboxamide isomerase from Alkalilimnicola ehrlichii (strain ATCC BAA-1101 / DSM 17681 / MLHE-1).